The chain runs to 475 residues: RNA pseudouridine synthase 3, mitochondrial (475 aa).

Residues 1 to 15 (MLCRRRRVGAAVRWL) constitute a mitochondrion transit peptide. The tract at residues 40 to 74 (RLGKPKPGPRPRQLLSLPPFPGGGDGDPLPGRKAA) is disordered. The region spanning 90–160 (ADVPQEVVQA…GEIKKRYETI (71 aa)) is the S4 RNA-binding domain. Residue D230 is part of the active site.

It belongs to the pseudouridine synthase RluA family.

It is found in the mitochondrion. It catalyses the reaction a uridine in RNA = a pseudouridine in RNA. The protein is RNA pseudouridine synthase 3, mitochondrial of Oryza sativa subsp. japonica (Rice).